The following is a 271-amino-acid chain: Putative phosphoenolpyruvate synthase regulatory protein (271 aa).

Position 152–159 (152–159 (GVSRSGKT)) interacts with ADP.

The protein belongs to the pyruvate, phosphate/water dikinase regulatory protein family. PSRP subfamily.

It carries out the reaction [pyruvate, water dikinase] + ADP = [pyruvate, water dikinase]-phosphate + AMP + H(+). The enzyme catalyses [pyruvate, water dikinase]-phosphate + phosphate + H(+) = [pyruvate, water dikinase] + diphosphate. Functionally, bifunctional serine/threonine kinase and phosphorylase involved in the regulation of the phosphoenolpyruvate synthase (PEPS) by catalyzing its phosphorylation/dephosphorylation. The chain is Putative phosphoenolpyruvate synthase regulatory protein from Dichelobacter nodosus (strain VCS1703A).